Consider the following 308-residue polypeptide: Acetylglutamate kinase (308 aa).

Substrate contacts are provided by residues 67–68 (GG), Arg89, and Asn193.

The protein belongs to the acetylglutamate kinase family. ArgB subfamily.

It localises to the cytoplasm. It carries out the reaction N-acetyl-L-glutamate + ATP = N-acetyl-L-glutamyl 5-phosphate + ADP. It participates in amino-acid biosynthesis; L-arginine biosynthesis; N(2)-acetyl-L-ornithine from L-glutamate: step 2/4. Catalyzes the ATP-dependent phosphorylation of N-acetyl-L-glutamate. This is Acetylglutamate kinase from Nitratidesulfovibrio vulgaris (strain DP4) (Desulfovibrio vulgaris).